Consider the following 2049-residue polypeptide: Polyglutamine-repeat protein pqn-41 (2049 aa).

The tract at residues 1 to 58 (MKPKKLQQGSDSAHTSDTESTKTCEKTAKKLPKTQKKLQKSKKTAKKRRDEEFRIFFP) is disordered. Positions 1 to 1601 (MKPKKLQQGS…TTSQHQQSIQ (1601 aa)) are sufficient to prevent linker cell death. A compositionally biased stretch (basic and acidic residues) spans 14 to 28 (HTSDTESTKTCEKTA). Over residues 29–47 (KKLPKTQKKLQKSKKTAKK) the composition is skewed to basic residues. Coiled-coil stretches lie at residues 264–302 (RRQE…ANSD) and 396–432 (TNAG…DRNH). Residues 459-492 (RGRNSTENSDSESSSEASEPPDDVITKEEPTDFS) are disordered. Residues 463 to 476 (STENSDSESSSEAS) are compositionally biased toward low complexity. Coiled-coil stretches lie at residues 686–730 (ESFE…SFET), 756–796 (ISAD…REFS), and 822–880 (QSSI…ARKL). Residues 1134–1150 (QQQHNHQNFQQQQQGNH) are compositionally biased toward low complexity. 4 disordered regions span residues 1134–1198 (QQQH…ENAA), 1236–1265 (AAAA…QQQN), 1481–1616 (YKQS…GAAY), and 1636–1661 (ATPK…TSQA). The span at 1162 to 1171 (QKRKYTKRKA) shows a compositional bias: basic residues. The span at 1176 to 1194 (AVASSSDQNGMKSPGSSAM) shows a compositional bias: polar residues. The span at 1495 to 1533 (STSSSSAAPASAPAPRAGAGAGATSSSAASSSTSTPSSS) shows a compositional bias: low complexity. Residues 1534–1546 (SHHKKSSPPHHQK) show a composition bias toward basic residues. Composition is skewed to low complexity over residues 1569 to 1604 (SAPI…QFSQ) and 1649 to 1661 (ATQQ…TSQA). Coiled-coil stretches lie at residues 1659–1685 (SQAS…AAAA) and 1725–1801 (QQYL…LQNI). Residues 1836–1858 (AQAQQAPPTSQPSQAATPQQQQQ) form a disordered region. 2 coiled-coil regions span residues 1863–1961 (RQME…AAAA) and 1991–2041 (SAQQ…AQQK).

As to expression, expressed in the linker cell just before it dies.

The protein localises to the cytoplasm. Functionally, in males, required for non-apoptotic death of the linker cell once it has finished guiding gonad elongation at the end of larval development. May be involved in nuclear envelope crenellation in the linker cell. Its function is as follows. In males, promotes linker cell survival. In Caenorhabditis elegans, this protein is Polyglutamine-repeat protein pqn-41.